The following is a 458-amino-acid chain: Alpha-glucosides-binding periplasmic protein AglE (458 aa).

The N-terminal stretch at 1–27 is a signal peptide; the sequence is MKRSLLIGVAAFALLAGTAGLAGTAGA.

Belongs to the bacterial solute-binding protein 1 family.

It localises to the periplasm. Its function is as follows. Part of the binding-protein-dependent transport system for alpha-glucosides such as sucrose, maltose and trehalose. This is Alpha-glucosides-binding periplasmic protein AglE (aglE) from Rhizobium meliloti (strain 1021) (Ensifer meliloti).